The primary structure comprises 380 residues: Cytochrome b (380 aa).

The next 4 membrane-spanning stretches (helical) occupy residues 33–53, 77–98, 113–133, and 178–198; these read FGSLLGLCLATQILTGLFLAM, WLIRNMHANGASFFFICIYLHI, WNVGVALFLLTMMTAFVGYVL, and FFAFHFLFPFVIAALTAIHLL. Positions 83 and 97 each coordinate heme b. Heme b contacts are provided by H182 and H196. H201 contributes to the a ubiquinone binding site. Transmembrane regions (helical) follow at residues 226–246, 288–308, 320–340, and 347–367; these read YKDLLGFATLMVTLTSLALFS, LGGVLALLSSILILTAVPALH, ITQLLFWTLVAAVLVLTWIGG, and FIIIGQIASLLYFMLFLTLIP.

The protein belongs to the cytochrome b family. The cytochrome bc1 complex contains 3 respiratory subunits (MT-CYB, CYC1 and UQCRFS1), 2 core proteins (UQCRC1 and UQCRC2) and probably 6 low-molecular weight proteins. Heme b serves as cofactor.

Its subcellular location is the mitochondrion inner membrane. Functionally, component of the ubiquinol-cytochrome c reductase complex (complex III or cytochrome b-c1 complex) that is part of the mitochondrial respiratory chain. The b-c1 complex mediates electron transfer from ubiquinol to cytochrome c. Contributes to the generation of a proton gradient across the mitochondrial membrane that is then used for ATP synthesis. This Percopsis transmontana (Sand roller) protein is Cytochrome b (mt-cyb).